Here is a 227-residue protein sequence, read N- to C-terminus: Phosphoribosylformylglycinamidine synthase subunit PurQ (227 aa).

The Glutamine amidotransferase type-1 domain maps to 2 to 226 (KFAVIQFPGS…VKAWKEEQVN (225 aa)). Catalysis depends on Cys-86, which acts as the Nucleophile. Residues His-195 and Glu-197 contribute to the active site.

In terms of assembly, part of the FGAM synthase complex composed of 1 PurL, 1 PurQ and 2 PurS subunits.

The protein localises to the cytoplasm. The catalysed reaction is N(2)-formyl-N(1)-(5-phospho-beta-D-ribosyl)glycinamide + L-glutamine + ATP + H2O = 2-formamido-N(1)-(5-O-phospho-beta-D-ribosyl)acetamidine + L-glutamate + ADP + phosphate + H(+). It catalyses the reaction L-glutamine + H2O = L-glutamate + NH4(+). It participates in purine metabolism; IMP biosynthesis via de novo pathway; 5-amino-1-(5-phospho-D-ribosyl)imidazole from N(2)-formyl-N(1)-(5-phospho-D-ribosyl)glycinamide: step 1/2. In terms of biological role, part of the phosphoribosylformylglycinamidine synthase complex involved in the purines biosynthetic pathway. Catalyzes the ATP-dependent conversion of formylglycinamide ribonucleotide (FGAR) and glutamine to yield formylglycinamidine ribonucleotide (FGAM) and glutamate. The FGAM synthase complex is composed of three subunits. PurQ produces an ammonia molecule by converting glutamine to glutamate. PurL transfers the ammonia molecule to FGAR to form FGAM in an ATP-dependent manner. PurS interacts with PurQ and PurL and is thought to assist in the transfer of the ammonia molecule from PurQ to PurL. The chain is Phosphoribosylformylglycinamidine synthase subunit PurQ from Listeria monocytogenes serotype 4a (strain HCC23).